A 175-amino-acid polypeptide reads, in one-letter code: Ribosome maturation factor RimM (175 aa).

A PRC barrel domain is found at 99-172; the sequence is SIEFTWEHFI…KLTMIIPDGL (74 aa).

It belongs to the RimM family. In terms of assembly, binds ribosomal protein uS19.

It is found in the cytoplasm. An accessory protein needed during the final step in the assembly of 30S ribosomal subunit, possibly for assembly of the head region. Essential for efficient processing of 16S rRNA. May be needed both before and after RbfA during the maturation of 16S rRNA. It has affinity for free ribosomal 30S subunits but not for 70S ribosomes. This chain is Ribosome maturation factor RimM, found in Porphyromonas gingivalis (strain ATCC BAA-308 / W83).